The chain runs to 265 residues: Eukaryotic translation initiation factor 3 subunit J (265 aa).

The disordered stretch occupies residues 1–71 (MSWDDEAING…KESSADRALL (71 aa)). The span at 23-32 (WDAEIGDDEP) shows a compositional bias: acidic residues. The span at 42-71 (EEKKPAPKPKKEQPKKVKKGKESSADRALL) shows a compositional bias: basic and acidic residues. Ser65 bears the Phosphoserine mark. Thr75 is subject to Phosphothreonine. The residue at position 92 (Ser92) is a Phosphoserine. Positions 219–265 (VRGGTATGGAGKKKVKGKTNLGGAFKKDQDFDLDGPDDFEFGDDDFM) are disordered. Omega-N-methylarginine is present on Arg220. Over residues 249–265 (FDLDGPDDFEFGDDDFM) the composition is skewed to acidic residues.

The protein belongs to the eIF-3 subunit J family. As to quaternary structure, probable component of the eukaryotic translation initiation factor 3 (eIF-3) complex. Is not part of the eIF-3 core complex, with which it is associated in substochiometric amounts.

It is found in the cytoplasm. Component of the eukaryotic translation initiation factor 3 (eIF-3) complex, which is involved in protein synthesis of a specialized repertoire of mRNAs and, together with other initiation factors, stimulates binding of mRNA and methionyl-tRNAi to the 40S ribosome. The eIF-3 complex specifically targets and initiates translation of a subset of mRNAs involved in cell proliferation. The polypeptide is Eukaryotic translation initiation factor 3 subunit J (Saccharomyces cerevisiae (strain ATCC 204508 / S288c) (Baker's yeast)).